The following is a 214-amino-acid chain: Clavatol biosynthesis cluster protein B (214 aa).

The signal sequence occupies residues 1–17 (MAALSFQCLCVASAVRA). Residues Asn-103 and Asn-204 are each glycosylated (N-linked (GlcNAc...) asparagine).

It participates in secondary metabolite biosynthesis. Functionally, part of the cla gene cluster that produces clavatol and ortho-quinone methide. The clavatol biosynthesis cluster cla and the terrestric acid cluster tra are both involved in the production of peniphenones and penilactones. The non-reducing PKS claF is responsible for the formation of clavatol from successive condensations of 3 malonyl-CoA units, presumably with a simple acetyl-CoA starter unit, and 2 methylation steps. The esterase claE probably collaborates with claF by catalyzing the hydrolysis of ACP-bound acyl intermediates to free the ACP from stalled intermediates. The clavatol oxidase claD then converts clavatol to hydroxyclavatol. Spontaneous dehydration of hydroxyclavatol leads to the accumulation of the highly active ortho-quinone methide. On the other hand, the PKS-NRPS hybrid traA is involved in the formation of crustosic acid, with the help of traB and traD. The polyketide synthase module (PKS) of traA is responsible for the synthesis of the polyketide backbone via the condensation of an acetyl-CoA starter unit with 3 malonyl-CoA units. The downstream nonribosomal peptide synthetase (NRPS) module then amidates the carboxyl end of the polyketide with L-malic acid. Because traA lacks a designated enoylreductase (ER) domain, the required activity is provided the enoyl reductase traG. Crustosic acid undergoes decarboxylation and isomerization to the terrestric acid, catalyzed by the 2-oxoglutarate-dependent dioxygenase traH. Both acids are further converted to the 2 gamma-butyrolactones (R)-5-methyltetronic acid and (S)-5-carboxylmethyltetronic acid, with involvement of the cytochrome P450 monooxygenase claJ. Spontaneous addition of the methide to these gamma-butyrolactones leads to peniphenone D and penilactone D, which undergo again stereospecific attacking by methide to give penilactones A and B. The function of claB has not been investigated yet. This Penicillium crustosum (Blue mold fungus) protein is Clavatol biosynthesis cluster protein B.